The following is a 537-amino-acid chain: Putative cysteine ligase BshC (537 aa).

Positions 422 to 450 (IEKVEGMIEQQRRLNQDLLDEVAGNQNNI) form a coiled coil.

The protein belongs to the BshC family.

Functionally, involved in bacillithiol (BSH) biosynthesis. May catalyze the last step of the pathway, the addition of cysteine to glucosamine malate (GlcN-Mal) to generate BSH. The chain is Putative cysteine ligase BshC from Staphylococcus aureus (strain bovine RF122 / ET3-1).